Here is a 191-residue protein sequence, read N- to C-terminus: Peptide methionine sulfoxide reductase MsrA (191 aa).

The active site involves C21.

It belongs to the MsrA Met sulfoxide reductase family.

The enzyme catalyses L-methionyl-[protein] + [thioredoxin]-disulfide + H2O = L-methionyl-(S)-S-oxide-[protein] + [thioredoxin]-dithiol. The catalysed reaction is [thioredoxin]-disulfide + L-methionine + H2O = L-methionine (S)-S-oxide + [thioredoxin]-dithiol. Has an important function as a repair enzyme for proteins that have been inactivated by oxidation. Catalyzes the reversible oxidation-reduction of methionine sulfoxide in proteins to methionine. This is Peptide methionine sulfoxide reductase MsrA from Ralstonia nicotianae (strain ATCC BAA-1114 / GMI1000) (Ralstonia solanacearum).